Here is a 560-residue protein sequence, read N- to C-terminus: Digoxin reductase (560 aa).

Residues 1–48 (MEYGKCRGIERGMGRRDFLKAATLLGATAAGAGMLAGCAPKSASEAQA) constitute a signal peptide (tat-type signal).

Belongs to the FAD-dependent oxidoreductase 2 family. In terms of assembly, may form a membrane-associated complex with Cgr1. The cofactor is FAD. [4Fe-4S] cluster is required as a cofactor. In terms of processing, predicted to be exported by the Tat system. The position of the signal peptide cleavage has not been experimentally proven.

Its subcellular location is the cell membrane. The catalysed reaction is digoxin + 2 Fe(II)-[cytochrome c] + 3 H(+) = dihydrodigoxin + 2 Fe(III)-[cytochrome c]. It catalyses the reaction digitoxin + 2 Fe(II)-[cytochrome c] + 3 H(+) = dihydrodigitoxin + 2 Fe(III)-[cytochrome c]. The enzyme catalyses digoxigenin + 2 Fe(II)-[cytochrome c] + 3 H(+) = dihydrodigoxigenin + 2 Fe(III)-[cytochrome c]. It carries out the reaction ouabain + 2 Fe(II)-[cytochrome c] + 3 H(+) = dihydroouabain + 2 Fe(III)-[cytochrome c]. The catalysed reaction is ouabagenin + 2 Fe(II)-[cytochrome c] + 3 H(+) = dihydroouabagenin + 2 Fe(III)-[cytochrome c]. Its function is as follows. Involved in the inactivation of the cardiac medication and plant natural product digoxin, thus decreasing drug efficacy and toxicity. Catalyzes the reduction of the alpha,beta-unsaturated butyrolactone ring of digoxin to the inactive metabolite dihydrodigoxin. Likely uses the cytochrome Cgr1 as the physiological electron donor, encoded by the adjacent gene in the locus. Only reduces digoxin and other cardenolide toxins, such as digitoxin, digoxigenin, ouabain and ouabagenin. Therefore is a specialized enzyme present in some gut bacteria E.lenta that protects their human host against ingested plant toxins. The sequence is that of Digoxin reductase from Eggerthella lenta (strain ATCC 25559 / DSM 2243 / CCUG 17323 / JCM 9979 / KCTC 3265 / NCTC 11813 / VPI 0255 / 1899 B) (Eubacterium lentum).